Reading from the N-terminus, the 284-residue chain is Bifunctional protein FolD (284 aa).

Residues 164 to 166 (GRS) and serine 189 contribute to the NADP(+) site.

Belongs to the tetrahydrofolate dehydrogenase/cyclohydrolase family. Homodimer.

The enzyme catalyses (6R)-5,10-methylene-5,6,7,8-tetrahydrofolate + NADP(+) = (6R)-5,10-methenyltetrahydrofolate + NADPH. The catalysed reaction is (6R)-5,10-methenyltetrahydrofolate + H2O = (6R)-10-formyltetrahydrofolate + H(+). Its pathway is one-carbon metabolism; tetrahydrofolate interconversion. Its function is as follows. Catalyzes the oxidation of 5,10-methylenetetrahydrofolate to 5,10-methenyltetrahydrofolate and then the hydrolysis of 5,10-methenyltetrahydrofolate to 10-formyltetrahydrofolate. This is Bifunctional protein FolD from Listeria monocytogenes serotype 4a (strain HCC23).